The sequence spans 164 residues: Transcription elongation factor GreA (164 aa).

It belongs to the GreA/GreB family.

Its function is as follows. Necessary for efficient RNA polymerase transcription elongation past template-encoded arresting sites. The arresting sites in DNA have the property of trapping a certain fraction of elongating RNA polymerases that pass through, resulting in locked ternary complexes. Cleavage of the nascent transcript by cleavage factors such as GreA or GreB allows the resumption of elongation from the new 3'terminus. GreA releases sequences of 2 to 3 nucleotides. The polypeptide is Transcription elongation factor GreA (Helicobacter acinonychis (strain Sheeba)).